A 683-amino-acid chain; its full sequence is MASQLFRPLTPRLSSLTPVKPHFGHLQAGISVAIQRTDGRIHLAVVTEVRRDNAWVTVEWAEKGVKKGKKVALETIFLLNPALALAGPAAQGRASRSVSLAPPSVIGDQRTAARWAGKIPQRNETPSGDSLAVRVPSSPCLMTQRKSACLREIEKLQKQRERRRRLHREIRAQRARDADTGNAHYEIRRLIEECRRRLRGGRISGPEPRDGRRICVCVRKRPLNRQEATREDLDIVTIPSDNVVMVHESKQKVDLTRYLENQTFCFDHAFDDTASNELVYQFTDQPLVESIFRHGMATCFAYGQTGSGKTHTMGGGFSGRDQDCSKGIYAMVAQDVFLLLKTSAYEKLNLKVYGTFFEIYGGKVYDLLNWKKKLQVLEDGSQQIQVVGLQEQEVCCVEDMLNLVELGNSCRTSGQTSVNAHSSRSHAVFQIILKSRGKLHGKFSLVDLAGNERGADTAKANRKRQLEGAEINKSLLALKECIRALGQNKSHTPFRASKLTQVLRDSFIGQNSSTCMIATISPGMASCENTLNTLRYANRVKEITLNLRPRHRCLYPAEREMPRVLENHIRNSEMSLQGDEFIRIPCLQSEEEKETEGIKVLSSPLVDTTISWKEASQWPDNKIQDTSDEVNCNVDFCIAQLLSILEKKIDILTEIRRKLKLLQADIQKENRHGEVNGERSDLK.

Residue Thr-125 is modified to Phosphothreonine; by PLK1. The stretch at 141-176 (LMTQRKSACLREIEKLQKQRERRRRLHREIRAQRAR) forms a coiled coil. Ser-204 carries the post-translational modification Phosphoserine; by PLK1. Residues 213 to 543 (RICVCVRKRP…LRYANRVKEI (331 aa)) form the Kinesin motor domain. 303–310 (GQTGSGKT) serves as a coordination point for ATP. Residues 640-672 (QLLSILEKKIDILTEIRRKLKLLQADIQKENRH) adopt a coiled-coil conformation.

It belongs to the TRAFAC class myosin-kinesin ATPase superfamily. Kinesin family. MCAK/KIF2 subfamily. In terms of processing, phosphorylation at Thr-125 by PLK1 is required for activity in the correction of kinetochore-microtubules attachment errors, while phosphorylation at Ser-204 also by PLK1 is required for the kinetochore localization and activity in prometaphase.

Its subcellular location is the cytoplasm. It is found in the cytoskeleton. It localises to the microtubule organizing center. The protein resides in the centrosome. The protein localises to the spindle. Its subcellular location is the chromosome. It is found in the centromere. It localises to the kinetochore. Plus end-directed microtubule-dependent motor required for spindle assembly and chromosome movement during mitosis. Has microtubule depolymerization activity. Plays a role in chromosome congression. This is Kinesin-like protein KIF2B from Bos taurus (Bovine).